We begin with the raw amino-acid sequence, 86 residues long: Weak toxin 1 (86 aa).

An N-terminal signal peptide occupies residues 1–23; sequence MKTLLLTLVVVAIVCLDLGYTLT. Disulfide bonds link Cys24–Cys45, Cys27–Cys32, Cys38–Cys63, Cys67–Cys78, and Cys79–Cys84.

It belongs to the three-finger toxin family. Ancestral subfamily. Orphan group II sub-subfamily. As to expression, expressed by the venom gland.

The protein resides in the secreted. Functionally, binds with low affinity to muscular (alpha-1-beta-1-delta-epsilon/CHRNA1-CHRNB1-CHRND-CHRNE) and very low affinity to neuronal (alpha-7/CHRNA7) nicotinic acetylcholine receptor (nAChR). This is Weak toxin 1 from Bungarus candidus (Malayan krait).